The chain runs to 376 residues: Alpha-ketoglutarate-dependent dioxygenase esdpJ (376 aa).

Fe cation is bound by residues histidine 145 and aspartate 147. Threonine 202 provides a ligand contact to 2-oxoglutarate. Residues 234 to 260 (YNQSSQEKKSEIHVEPRGSPNNVGSDL) form a disordered region. Basic and acidic residues predominate over residues 239-249 (QEKKSEIHVEP). Histidine 335 is a binding site for Fe cation. 2-oxoglutarate-binding residues include arginine 347 and arginine 351. The interval 354-376 (GVGEQPYLDPESKTRREALGEFN) is disordered. Residues 363–376 (PESKTRREALGEFN) are compositionally biased toward basic and acidic residues.

This sequence belongs to the TfdA dioxygenase family. Requires Fe(2+) as cofactor.

Alpha-ketoglutarate-dependent dioxygenas; part of the cluster that mediates the biosynthesis of shearones, diterpenoid pyrones (DPs) which are structurally diverse meroterpenoids consisting of a diterpene linked by a pyrone, and which may exhibit a range of bioactivities. The alpha-ketoglutarate-dependent dioxygenase esdpJ seems not to be involved in this pathway. The molecular scaffold is commonly biosynthesized by a series of enzymes including the non-reducing polyketide synthase (NR-PKS) esdpA that generates an alpha-pyrone; the prenyltransferase esdpC that attaches a geranylgeranyl pyrophosphate (GGPP) produced by the GGPP synthase (GGPPS) esdpD onto the pyrone unit; the FAD-dependent monooxygenase esdpE that converts an olefin on the diterpene unit into an epoxide; and the terpene cyclase esdpB that catalyzes the cyclization reactions to give the molecular backbone shearone A. In the modification steps, esdpF oxidizes the hydroxy group to a ketone at C-3 and esdpG then attaches hydroxy groups at both C-11 and C-12. After that, esdpI hydroxylates at C-20 and esdpH hydroxylates at C-6'. The ether bridge is generated by nucleophilic attack of the hydroxy group at C-20 to the carbonyl carbon at C-3. EsdpH can also functions prior to esdpI. The different combinations of these modification enzymes lead to the production of diverse shearone derivatives, shearone I being the end product of the pathway. The protein is Alpha-ketoglutarate-dependent dioxygenase esdpJ of Penicillium shearii (Eupenicillium shearii).